The chain runs to 1022 residues: Polyamine-modulated factor 1-binding protein 1 (1022 aa).

Coiled coils occupy residues 89-121, 169-281, 312-377, 411-732, and 758-968; these read NKQY…LQAS, EKLH…ACSN, SEDC…LREE, LKKD…SAIQ, and QDDL…KAGN. Composition is skewed to basic and acidic residues over residues 545 to 556 and 571 to 582; these read QKESSKIEEERK and EGQRRLSNAEKE. Residues 545 to 582 are disordered; sequence QKESSKIEEERKHNRQRLQELSSELSEGQRRLSNAEKE.

Expressed in the testis.

Its subcellular location is the cell projection. It localises to the cilium. The protein localises to the flagellum. In terms of biological role, required for normal spermatogenesis. It functions as a scaffold protein that attaches the sperm head-tail connecting piece to the nuclear envelope, thus maintaining sperm head and tail integrity. May also be involved in the general organization of cellular cytoskeleton. The sequence is that of Polyamine-modulated factor 1-binding protein 1 (Pmfbp1) from Mus musculus (Mouse).